The following is a 132-amino-acid chain: Transcription antitermination protein NusB (132 aa).

It belongs to the NusB family.

Functionally, involved in transcription antitermination. Required for transcription of ribosomal RNA (rRNA) genes. Binds specifically to the boxA antiterminator sequence of the ribosomal RNA (rrn) operons. The chain is Transcription antitermination protein NusB from Campylobacter jejuni subsp. jejuni serotype O:2 (strain ATCC 700819 / NCTC 11168).